A 208-amino-acid polypeptide reads, in one-letter code: NAD(P)H dehydrogenase (quinone) (208 aa).

One can recognise a Flavodoxin-like domain in the interval 4 to 199; the sequence is VNVIFHSIHG…AMARYQGRHV (196 aa). Residues 10–15 and 87–89 contribute to the FMN site; these read SIHGHT and TRY. A substrate-binding site is contributed by Trp107. Residues 122-128 and His143 each bind FMN; that span reads SSGTQHG.

It belongs to the WrbA family. Requires FMN as cofactor.

It carries out the reaction a quinone + NADH + H(+) = a quinol + NAD(+). It catalyses the reaction a quinone + NADPH + H(+) = a quinol + NADP(+). The polypeptide is NAD(P)H dehydrogenase (quinone) (Methanosarcina barkeri (strain Fusaro / DSM 804)).